The sequence spans 111 residues: Estrogen receptor (111 aa).

Residues 1-42 form a disordered region; sequence PSGYAVREAGPPAYYRPNSDNRRQGGRERLASTSDKGSMAVE. Residues 1–49 form a modulating region; it reads PSGYAVREAGPPAYYRPNSDNRRQGGRERLASTSDKGSMAVESAKETRY. Positions 19–30 are enriched in basic and acidic residues; it reads SDNRRQGGRERL. At Ser32 the chain carries Phosphoserine. 2 consecutive NR C4-type zinc fingers follow at residues 50–70 and 86–110; these read CAVCNDYASGYHYGVWSCEGC and CPATNQCTIDKNRRKSCQACRLRKC. Positions 50–111 form a DNA-binding region, nuclear receptor; it reads CAVCNDYASG…CQACRLRKCY (62 aa).

The protein belongs to the nuclear hormone receptor family. NR3 subfamily. Binds DNA as a homodimer. Can form a heterodimer with ESR2. Interacts with coactivator NCOA5. Interacts with PELP1, the interaction is enhanced by 17-beta-estradiol; the interaction increases ESR1 transcriptional activity. Interacts with NCOA7; the interaction is ligand-inducible. Interacts with AKAP13, CUEDC2, HEXIM1, KDM5A, MAP1S, SMARD1, and UBE1C. Interacts with MUC1; the interaction is stimulated by 7 beta-estradiol (E2) and enhances ESR1-mediated transcription. Interacts with DNTTIP2, and UIMC1. Interacts with KMT2D/MLL2. Interacts with ATAD2; the interaction is enhanced by estradiol. Interacts with KIF18A and LDB1. Interacts with RLIM (via its C-terminus). Interacts with MACROD1. Interacts with SH2D4A and PLCG. Interacts with SH2D4A; the interaction blocks binding to PLCG and inhibits estrogen-induced cell proliferation. Interacts with DYNLL1. Interacts with CCDC62; the interaction requires estradiol and appears to enhance the transcription of target genes. Interacts with NR2C1; the interaction prevents homodimerization of ESR1 and suppresses its transcriptional activity and cell growth. Interacts with DNAAF4. Interacts with PRMT2. Interacts with RBFOX2. Interacts with EP300; the interaction is estrogen-dependent and enhanced by CITED1. Interacts with CITED1; the interaction is estrogen-dependent. Interacts with FAM120B, FOXL2, PHB2 and SLC30A9. Interacts with coactivators NCOA3 and NCOA6. Interacts with STK3/MST2 only in the presence of SAV1 and vice-versa. Binds to CSNK1D. Interacts with NCOA2; NCOA2 can interact with ESR1 AF-1 and AF-2 domains simultaneously and mediate their transcriptional synergy. Interacts with DDX5. Interacts with NCOA1; the interaction seems to require a self-association of N-terminal and C-terminal regions. Interacts with ZNF366, DDX17, NFKB1, RELA, SP1 and SP3. Interacts with NRIP1. Interacts with GPER1; the interaction occurs in an estrogen-dependent manner. Interacts with CLOCK and the interaction is stimulated by estrogen. Interacts with TRIP4 (ufmylated); estrogen dependent. Interacts with LMTK3; the interaction phosphorylates ESR1 (in vitro) and protects it against proteasomal degradation. Interacts with CCAR2 (via N-terminus) in a ligand-independent manner. Interacts with ZFHX3. Interacts with SFR1 in a ligand-dependent and -independent manner. Interacts with DCAF13, LATS1 and DCAF1; regulates ESR1 ubiquitination and ubiquitin-mediated proteasomal degradation. Interacts (via DNA-binding domain) with POU4F2 (C-terminus); this interaction increases the estrogen receptor ESR1 transcriptional activity in a DNA- and ligand 17-beta-estradiol-independent manner. Interacts with ESRRB isoform 1. Interacts with UBE3A and WBP2. Interacts with GTF2B. Interacts with RBM39. In the absence of hormonal ligand, interacts with TACC1. Interacts with PI3KR1 or PI3KR2 and PTK2/FAK1. Interacts with SRC. Interacts with BAG1; the interaction is promoted in the absence of estradiol (17-beta-estradiol/E2). Interacts with and ubiquitinated by STUB1; the interaction is promoted in the absence of estradiol (17-beta-estradiol/E2). Interacts with NEDD8. In terms of processing, ubiquitinated; regulated by LATS1 via DCAF1 it leads to ESR1 proteasomal degradation. Deubiquitinated by OTUB1. Ubiquitinated by STUB1/CHIP; in the CA1 hippocampal region following loss of endogenous circulating estradiol (17-beta-estradiol/E2). Ubiquitinated by UBR5, leading to its degradation: UBR5 specifically recognizes and binds ligand-bound ESR1 when it is not associated with coactivators (NCOAs). In presence of NCOAs, the UBR5-degron is not accessible, preventing its ubiquitination and degradation. Post-translationally, dimethylated by PRMT1. Demethylated by JMJD6. Palmitoylated by ZDHHC7 and ZDHHC21. This modification is required for plasma membrane targeting and for rapid intracellular signaling via ERK and AKT kinases and cAMP generation, but not for signaling mediated by the nuclear hormone receptor. In terms of processing, phosphorylated by cyclin A/CDK2 and CK1. Phosphorylation probably enhances transcriptional activity. Dephosphorylation by PPP5C inhibits its transactivation activity. Phosphorylated by LMTK3 (in vitro).

The protein localises to the nucleus. The protein resides in the cytoplasm. Its subcellular location is the golgi apparatus. It localises to the cell membrane. Its function is as follows. Nuclear hormone receptor. The steroid hormones and their receptors are involved in the regulation of eukaryotic gene expression and affect cellular proliferation and differentiation in target tissues. Ligand-dependent nuclear transactivation involves either direct homodimer binding to a palindromic estrogen response element (ERE) sequence or association with other DNA-binding transcription factors, such as AP-1/c-Jun, c-Fos, ATF-2, Sp1 and Sp3, to mediate ERE-independent signaling. Ligand binding induces a conformational change allowing subsequent or combinatorial association with multiprotein coactivator complexes through LXXLL motifs of their respective components. Mutual transrepression occurs between the estrogen receptor (ER) and NF-kappa-B in a cell-type specific manner. Decreases NF-kappa-B DNA-binding activity and inhibits NF-kappa-B-mediated transcription from the IL6 promoter and displace RELA/p65 and associated coregulators from the promoter. Recruited to the NF-kappa-B response element of the CCL2 and IL8 promoters and can displace CREBBP. Present with NF-kappa-B components RELA/p65 and NFKB1/p50 on ERE sequences. Can also act synergistically with NF-kappa-B to activate transcription involving respective recruitment adjacent response elements; the function involves CREBBP. Can activate the transcriptional activity of TFF1. Also mediates membrane-initiated estrogen signaling involving various kinase cascades. Essential for MTA1-mediated transcriptional regulation of BRCA1 and BCAS3. Maintains neuronal survival in response to ischemic reperfusion injury when in the presence of circulating estradiol (17-beta-estradiol/E2). The chain is Estrogen receptor (ESR1) from Ovis aries (Sheep).